The following is a 377-amino-acid chain: Guanine nucleotide-binding protein subunit beta-1 (377 aa).

WD repeat units lie at residues 63-93, 105-135, 154-185, 202-233, 246-276, 293-323, and 339-369; these read GHTGKVYSLDWTPEKNRIVSASQDGRLIVWN, LPCAWVMTCAFSPSGQSVACGGLDSVCSIFN, GHKGYVSSCQYVPDEDTHLITSSGDQTCVLWD, GHTADVQSVSISSSNPRLFVSGSCDTTARLWD, GHEGDVNTVKFFPDGNRFGTGSEDGTCRLFD, GDIPHVTSMAFSISGRLLFVGYSNGDCYVWD, and SHEGRISCLGLSADGSALCTGSWDTNLKIWA.

This sequence belongs to the WD repeat G protein beta family. In terms of assembly, g proteins are composed of 3 units, alpha, beta and gamma.

Functionally, guanine nucleotide-binding proteins (G proteins) are involved as a modulator or transducer in various transmembrane signaling systems. The beta and gamma chains are required for the GTPase activity, for replacement of GDP by GTP, and for G protein-effector interaction. The sequence is that of Guanine nucleotide-binding protein subunit beta-1 from Nicotiana tabacum (Common tobacco).